Reading from the N-terminus, the 310-residue chain is GMP synthase [glutamine-hydrolyzing] subunit B (310 aa).

The GMPS ATP-PPase domain occupies M1–F187. S27–S33 contributes to the ATP binding site.

In terms of assembly, heterodimer composed of a glutamine amidotransferase subunit (A) and a GMP-binding subunit (B).

It carries out the reaction XMP + L-glutamine + ATP + H2O = GMP + L-glutamate + AMP + diphosphate + 2 H(+). It participates in purine metabolism; GMP biosynthesis; GMP from XMP (L-Gln route): step 1/1. Its function is as follows. Catalyzes the synthesis of GMP from XMP. In Thermoplasma acidophilum (strain ATCC 25905 / DSM 1728 / JCM 9062 / NBRC 15155 / AMRC-C165), this protein is GMP synthase [glutamine-hydrolyzing] subunit B (guaAB).